A 404-amino-acid chain; its full sequence is Argininosuccinate synthase (404 aa).

Residues 10–18 (AYSGGVDTS) and Ala38 contribute to the ATP site. Residue Tyr89 participates in L-citrulline binding. Gly119 lines the ATP pocket. Thr121, Asn125, and Asp126 together coordinate L-aspartate. Asn125 contributes to the L-citrulline binding site. 5 residues coordinate L-citrulline: Arg129, Ser177, Ser186, Glu262, and Tyr274.

The protein belongs to the argininosuccinate synthase family. Type 1 subfamily. Homotetramer.

Its subcellular location is the cytoplasm. It carries out the reaction L-citrulline + L-aspartate + ATP = 2-(N(omega)-L-arginino)succinate + AMP + diphosphate + H(+). It participates in amino-acid biosynthesis; L-arginine biosynthesis; L-arginine from L-ornithine and carbamoyl phosphate: step 2/3. This Prochlorococcus marinus (strain AS9601) protein is Argininosuccinate synthase.